Here is a 732-residue protein sequence, read N- to C-terminus: MIFKVWFSYEDEEVELSELTNDTTVSAIRKILHEGKIFRFPYGTSQTDLQIGKMLPSGSGGGATADSKFEKFKARNTLADIQYKVGDTLYVRVKKSKPTNDSLLPTLNIAFLDGSERAIKWEYDPYTTTAQWTCTATLVKVEPVPFAEGAFRKAYHTLDLSKSGASGRYVSKIGKKPTPRPSYFEDVKMQMIAKKWADKYNSFKPPKKIEFLQSCVLEFVDRTSSDLICGAEPYVEGQYRKYNNNSGFVSNDERNTPQSFSHFTYEHSNHQLLIIDIQGVGDHYTDPQIHTYDGVGFGIGNLGQKGFEKFLDTHKCNAICQYLNLQSINPKSEKSDCGTVPRPDLIFPDTSERDNNNNNNNNNNNNNNNNNNNSNNNNNNNSSISKSLVEISSGSKERNDRDSPSRQLFVSNDGNTLNTNKERSKSKSIDLEKPEILINNKKKESINLETIKLIETIKGYHVTSHLCICDNLLFTGCSDNSIRVYDYKSQNMECVQTLKGHEGPVESICYNDQYLFSGSSDHSIKVWDLKKLRCIFTLEGHDKPVHTVLLNDKYLFSGSSDKTIKVWDLKTLECKYTLESHARAVKTLCISGQYLFSGSNDKTIKVWDLKTFRCNYTLKGHTKWVTTICILGTNLYSGSYDKTIRVWNLKSLECSATLRGHDRWVEHMVICDKLLFTASDDNTIKIWDLETLRCNTTLEGHNATVQCLAVWEDKKCVISCSHDQSIRVWGWN.

An Alpha-type protein kinase domain is found at Asp124–Ile328. Position 298 to 303 (Gly298 to Gly303) interacts with ATP. Positions Lys331–Ser428 are disordered. Low complexity predominate over residues Asn356–Gly394. Residues Ser395 to Pro404 are compositionally biased toward basic and acidic residues. Residues Ser405–Thr419 are compositionally biased toward polar residues. WD repeat units lie at residues Lys458–Asp486, Gly500–Asp528, Gly540–Asp568, Ser580–Asp608, Gly620–Asn648, Gly660–Asp688, and Gly700–Gly730.

Belongs to the protein kinase superfamily. Alpha-type protein kinase family. ALPK subfamily.

It carries out the reaction L-threonyl-[myosin heavy-chain] + ATP = O-phospho-L-threonyl-[myosin heavy-chain] + ADP + H(+). Functionally, catalyzes its autophosphorylation, which is needed for enzymatic activity and phosphorylates myosin II heavy chain at a threonine in the C-terminal tail region. This phosphorylation is critical in regulating the assembly and disassembly of myosin II filament. Participates in control of myosin localization. This is Myosin heavy chain kinase B (mhkB) from Dictyostelium discoideum (Social amoeba).